Reading from the N-terminus, the 1764-residue chain is Cilia- and flagella-associated protein 44 (1764 aa).

7 WD repeats span residues Gly-115 to Arg-157, Ala-160 to Lys-199, Gly-208 to Thr-248, Cys-255 to Pro-294, His-361 to Glu-400, Ala-454 to Thr-493, and Val-495 to Leu-534. Positions Gln-570–Leu-654 are disordered. The span at Lys-575 to Gly-584 shows a compositional bias: basic residues. 2 stretches are compositionally biased toward basic and acidic residues: residues Lys-585–Gly-596 and Gly-604–Ala-628. Residues Glu-629–Asp-641 are compositionally biased toward acidic residues. 3 WD repeats span residues Ser-649–Ala-692, Ala-707–Met-752, and Gln-753–Pro-791. Residues Tyr-821–Leu-850 adopt a coiled-coil conformation. 2 disordered regions span residues Ala-972–Ala-1003 and Lys-1426–Gly-1468. Over residues Gly-1434–Glu-1462 the composition is skewed to acidic residues. Coiled-coil stretches lie at residues Asp-1479–Gln-1517, Leu-1567–Ile-1674, and Glu-1729–Lys-1758.

The protein belongs to the CFAP44 family.

The protein localises to the cell projection. The protein resides in the cilium. Its subcellular location is the flagellum. It is found in the cytoplasm. It localises to the cytoskeleton. The protein localises to the flagellum axoneme. Functionally, flagellar protein involved in sperm flagellum axoneme organization and function. In Chlamydomonas reinhardtii (Chlamydomonas smithii), this protein is Cilia- and flagella-associated protein 44.